The chain runs to 1362 residues: Bromodomain-containing protein 4B (1362 aa).

6 disordered regions span residues 22–57, 200–243, 274–367, 476–639, 699–941, and 953–1349; these read EGAQ…QPKR, SLGD…HPPA, LANH…DSKT, DEPE…SYEE, CLRK…TQSP, and SQAP…MNFQ. Over residues 34 to 49 the composition is skewed to pro residues; sequence QPQPQTPMMQTPPPEI. The 107-residue stretch at 57–163 folds into the Bromo 1 domain; the sequence is RQTNQLQYLL…KLFLQKISEM (107 aa). The span at 219–234 shows a compositional bias: pro residues; it reads TPTPPAVIRAPTPPQT. Over residues 326 to 342 the composition is skewed to basic and acidic residues; that stretch reads PRKESGRQIRPIKKTEV. Residues 348-358 show a composition bias toward pro residues; sequence PAPPDLHPQPA. Residues 365 to 474 enclose the Bromo 2 domain; that stretch reads SKTSEQLRYC…DVFEMRFAKM (110 aa). Pro residues predominate over residues 481 to 503; that stretch reads APAPVPSPAPGPPAPSIKIPPPT. The interval 503-521 is NPS region; it reads TSSDTSSDSSSDSESSSDS. Positions 504–516 are enriched in low complexity; that stretch reads SSDTSSDSSSDSE. The tract at residues 542-597 is BID region; the sequence is QLAALSQPQPNKPKKKEREKRKEKHKRKEEVEETRKGRIREPPAKKPKKSVQVSGG. Over residues 553-568 the composition is skewed to basic residues; that stretch reads KPKKKEREKRKEKHKR. Residues 569–585 show a composition bias toward basic and acidic residues; that stretch reads KEEVEETRKGRIREPPA. Residues 606–621 show a composition bias toward pro residues; that stretch reads PPPVTRPARPAPPPAP. An NET domain is found at 623 to 707; that stretch reads ESSEEDTQRC…SCLRKKRKPQ (85 aa). Positions 628–639 are enriched in basic and acidic residues; that stretch reads DTQRCRPMSYEE. The segment covering 722–737 has biased composition (low complexity); the sequence is SYSSSESESSSESSTS. The span at 750–766 shows a compositional bias: basic residues; it reads QKKKGHSGRESRKHHHP. Composition is skewed to pro residues over residues 772-793 and 871-889; these read IAPP…PPPS and PARP…PHHQ. Positions 893–905 are enriched in basic residues; the sequence is HVHHHHHHHHHAQ. Polar residues predominate over residues 926-941; that stretch reads YLQQLHKSQQPPTQSP. Composition is skewed to low complexity over residues 953–963, 977–1006, 1014–1028, and 1041–1050; these read SQAPMAAPAQS, SSAS…QPAG, QQQQ…PALQ, and HQQAKQQQVI. A C-terminal (CTD) region region spans residues 1061–1361; sequence RQQKQETYPG…LMEIFEQNLF (301 aa). Residues 1086-1099 show a composition bias toward pro residues; the sequence is QVPPYPGLTHPPSP. Residues 1186–1207 are compositionally biased toward basic and acidic residues; it reads PEKEKQKQEPKTPVAPKKDLKI. Residues 1224 to 1234 show a composition bias toward polar residues; the sequence is PTSAGKSTSDS. Over residues 1236-1293 the composition is skewed to basic and acidic residues; that stretch reads ELFRRQAREKEERERALKHQAEQAERMRREQERMRTREDDDVQDQTRKAHEEARRRQE. The segment covering 1308-1319 has biased composition (low complexity); that stretch reads PAAPSPAQSSQP. Over residues 1322–1334 the composition is skewed to basic and acidic residues; that stretch reads DQREMARKREQER.

Belongs to the BET family.

The protein localises to the nucleus. It localises to the chromosome. In terms of biological role, chromatin reader protein that recognizes and binds acetylated histones and plays a key role in transmission of epigenetic memory across cell divisions and transcription regulation. Remains associated with acetylated chromatin throughout the entire cell cycle and provides epigenetic memory for postmitotic G1 gene transcription by preserving acetylated chromatin status and maintaining high-order chromatin structure. During interphase, plays a key role in regulating the transcription of signal-inducible genes by associating with the P-TEFb complex and recruiting it to promoters. The sequence is that of Bromodomain-containing protein 4B (brd4-b) from Xenopus laevis (African clawed frog).